The following is a 1455-amino-acid chain: Nik-related protein kinase (1455 aa).

Positions 25–313 (FSLDKAIGLG…SGNMLLHPFV (289 aa)) constitute a Protein kinase domain. Residues 31–39 (IGLGTYGRI) and Lys-54 contribute to the ATP site. The Proton acceptor role is filled by Asp-177. 2 disordered regions span residues 385–404 (LHGE…PQDQ) and 471–568 (TQDN…EDKE). The span at 471–480 (TQDNKATSPE) shows a compositional bias: polar residues. Residues 494–505 (EALETEQPKDLD) are compositionally biased toward basic and acidic residues. Over residues 520–531 (QPRQGQAAEQQQ) the composition is skewed to low complexity. Positions 540–568 (PPEEDREPEQAEVQEEAVEPPQAEIEDKE) are enriched in acidic residues. Residues 716-750 (RRRHRRWEDIFNQHEEQLRRVENDREDDSSDNDEV) are a coiled coil. Disordered regions lie at residues 760–854 (IEPH…PPYS) and 1029–1080 (AFGN…TETS). Phosphoserine occurs at positions 847 and 850. Over residues 1029 to 1038 (AFGNHGANRG) the composition is skewed to low complexity. Positions 1044–1078 (RNREANGRNEENGAFGRDQHVFPEFEHEESDRGTE) are enriched in basic and acidic residues. The CNH domain maps to 1138–1425 (SSEVYCGSLW…RFLCARGDKM (288 aa)).

Belongs to the protein kinase superfamily. STE Ser/Thr protein kinase family. STE20 subfamily.

It catalyses the reaction L-seryl-[protein] + ATP = O-phospho-L-seryl-[protein] + ADP + H(+). The enzyme catalyses L-threonyl-[protein] + ATP = O-phospho-L-threonyl-[protein] + ADP + H(+). In terms of biological role, may phosphorylate cofilin-1 and induce actin polymerization through this process, during the late stages of embryogenesis. Involved in the TNF-alpha-induced signaling pathway. This chain is Nik-related protein kinase (Nrk), found in Mus musculus (Mouse).